A 413-amino-acid polypeptide reads, in one-letter code: Multidrug resistance protein MdtM (413 aa).

The Cytoplasmic portion of the chain corresponds to 1 to 14 (MQRIIQFFSQRATT). Residues 15-35 (LFFPMALILYDFAAYLTTDLI) form a helical membrane-spanning segment. The Periplasmic portion of the chain corresponds to 36 to 51 (QPGIINVVRDFNADVS). Residues 52-72 (LAPASVSLYLAGGMALQWLLG) form a helical membrane-spanning segment. At 73–81 (PLSDRIGRR) the chain is on the cytoplasmic side. Residues 82-102 (PVLIAGALIFTLACAATLLTT) form a helical membrane-spanning segment. The Periplasmic segment spans residues 103 to 106 (SMTQ). The chain crosses the membrane as a helical span at residues 107–127 (FLVARFVQGTSICFIATVGYV). Over 128–140 (TVQEAFGQTKAIK) the chain is Cytoplasmic. The helical transmembrane segment at 141–161 (LMAIITSIVLVAPVIGPLSGA) threads the bilayer. Residues 162 to 170 (ALMHFVHWK) are Periplasmic-facing. Residues 171 to 191 (VLFGIIAVMGLLALCGLLLAM) traverse the membrane as a helical segment. Over 192–225 (PETVQRGAVPFSAVSVLRDFRNVFRNPIFLTGAA) the chain is Cytoplasmic. The chain crosses the membrane as a helical span at residues 226–246 (TLSLSYIPMMSWVAVSPVILI). The Periplasmic segment spans residues 247–254 (DAGGMSTS). Residues 255–275 (QFAWAQVPVFGAVIVANMIVV) traverse the membrane as a helical segment. The Cytoplasmic portion of the chain corresponds to 276–289 (RLVKDPTRPRFIWR). A run of 2 helical transmembrane segments spans residues 290-310 (AVPI…LLPH) and 311-331 (VWLW…MIFP). Over 332–351 (TLFRFTLFSNNLPKGTVSAS) the chain is Cytoplasmic. A helical transmembrane segment spans residues 352–372 (LNMVILTVMAVSVEVGRWLWF). Residues 373 to 376 (HGGR) lie on the Periplasmic side of the membrane. Residues 377–397 (LPFHLLAAVAGVIVVFTLATL) traverse the membrane as a helical segment. Topologically, residues 398–413 (LQRVRQHEAAELAAEK) are cytoplasmic.

The protein belongs to the major facilitator superfamily.

The protein localises to the cell inner membrane. Its function is as follows. Proton-dependent efflux pump. Confers resistance to a broad spectrum of chemically unrelated substrates. This chain is Multidrug resistance protein MdtM (mdtM), found in Salmonella typhimurium (strain LT2 / SGSC1412 / ATCC 700720).